The sequence spans 424 residues: Adenylyltransferase and sulfurtransferase UBA4 (424 aa).

ATP is bound by residues Gly-76, Asp-97, 104–108 (TNLHR), Lys-121, and 165–166 (DS). Zn(2+) contacts are provided by Cys-206 and Cys-209. Cys-223 acts as the Glycyl thioester intermediate; for adenylyltransferase activity in catalysis. Cys-283 contacts Zn(2+). The Rhodanese domain occupies 326–422 (RNSDHVLLDV…WYSEVDQNIP (97 aa)). The active-site Cysteine persulfide intermediate; for sulfurtransferase activity is the Cys-382.

In the N-terminal section; belongs to the HesA/MoeB/ThiF family. UBA4 subfamily. The cofactor is Zn(2+).

It is found in the cytoplasm. Its subcellular location is the cytosol. The protein operates within tRNA modification; 5-methoxycarbonylmethyl-2-thiouridine-tRNA biosynthesis. Functionally, plays a central role in 2-thiolation of mcm(5)S(2)U at tRNA wobble positions of cytosolic tRNA(Lys), tRNA(Glu) and tRNA(Gln). Acts by mediating the C-terminal thiocarboxylation of sulfur carrier URM1. Its N-terminus first activates URM1 as acyl-adenylate (-COAMP), then the persulfide sulfur on the catalytic cysteine is transferred to URM1 to form thiocarboxylation (-COSH) of its C-terminus. The reaction probably involves hydrogen sulfide that is generated from the persulfide intermediate and that acts as a nucleophile towards URM1. Subsequently, a transient disulfide bond is formed. Does not use thiosulfate as sulfur donor; NFS1 probably acting as a sulfur donor for thiocarboxylation reactions. Prior mcm(5) tRNA modification by the elongator complex is required for 2-thiolation. May also be involved in protein urmylation. The sequence is that of Adenylyltransferase and sulfurtransferase UBA4 from Meyerozyma guilliermondii (strain ATCC 6260 / CBS 566 / DSM 6381 / JCM 1539 / NBRC 10279 / NRRL Y-324) (Yeast).